Consider the following 400-residue polypeptide: Lysophospholipid transporter LplT (400 aa).

12 helical membrane-spanning segments follow: residues 19 to 39, 53 to 73, 91 to 111, 139 to 159, 164 to 184, 195 to 213, 227 to 247, 257 to 277, 281 to 301, 304 to 324, 352 to 372, and 373 to 393; these read VIVA…ATLA, VLQM…GQMA, AGAA…LVGI, LMEA…GVLA, IAAL…NLFI, SWRL…VVLW, LFWG…PVAL, YLNA…AKLV, TVSR…IFSL, ALLP…FFVV, NSAM…GVPA, and VAIG…LWIW.

This sequence belongs to the major facilitator superfamily. LplT (TC 2.A.1.42) family.

Its subcellular location is the cell inner membrane. Catalyzes the facilitated diffusion of 2-acyl-glycero-3-phosphoethanolamine (2-acyl-GPE) into the cell. The sequence is that of Lysophospholipid transporter LplT from Salmonella enteritidis PT4 (strain P125109).